The primary structure comprises 107 residues: Small ribosomal subunit protein uS10c (107 aa).

Belongs to the universal ribosomal protein uS10 family. In terms of assembly, part of the 30S ribosomal subunit.

Its subcellular location is the plastid. It is found in the chloroplast. In terms of biological role, involved in the binding of tRNA to the ribosomes. This is Small ribosomal subunit protein uS10c from Thalassiosira pseudonana (Marine diatom).